Consider the following 324-residue polypeptide: UDP-galactose transporter homolog 1 (324 aa).

Helical transmembrane passes span 7-27 (LVIAVCGIYATFLTWSLAQEP) and 42-62 (HSSFIVLCQALTAAVVGLCYL). An N-linked (GlcNAc...) asparagine glycan is attached at N97. Transmembrane regions (helical) follow at residues 106–126 (VGYMLAKSCKLLPIMLVHVLV), 135–155 (KALVGVLVSGGVALFTLGGAE), 161–181 (ASLYGLGMLLVSLFLDGLTNA), 199–219 (HLMVALNTAIVLWNLAYLVLF), 237–257 (ILTYLFTYCACGALGQCFVFF), 265–285 (LVLATVTVTRKMVSMLLSIVV), and 290–310 (VRPVQWLGILVVFGGIIWETV).

Belongs to the nucleotide-sugar transporter family. SLC35B subfamily.

The protein resides in the endoplasmic reticulum membrane. Functionally, may be involved in specific transport of UDP-Gal from the cytosol to the Golgi lumen. Involved in the maintenance of optimal conditions for the folding of secretory pathway proteins in the endoplasmic reticulum. This is UDP-galactose transporter homolog 1 (HUT1) from Eremothecium gossypii (strain ATCC 10895 / CBS 109.51 / FGSC 9923 / NRRL Y-1056) (Yeast).